The following is a 759-amino-acid chain: Glucosylceramidase (759 aa).

The Proton donor role is filled by E247. E497 (nucleophile) is an active-site residue. Residues 576 to 600 form a disordered region; that stretch reads AFENESQRDPQSPAYSESQRNTESY. The segment covering 584–599 has biased composition (polar residues); it reads DPQSPAYSESQRNTES.

The protein belongs to the glycosyl hydrolase 5 (cellulase A) family.

It is found in the membrane. It catalyses the reaction a beta-D-glucosyl-(1&lt;-&gt;1')-N-acylsphing-4-enine + H2O = an N-acylsphing-4-enine + D-glucose. Functionally, specifically hydrolyzes the glucosidic linkage in glucosylceramide. May prevent accumulation of aberrent glucosylceramide containing immature ceramide. This Aspergillus fumigatus (Neosartorya fumigata) protein is Glucosylceramidase.